The chain runs to 579 residues: Probable cholinesterase (579 aa).

A signal peptide spans 1-19; the sequence is MTDHKIIMLLLLGIYCIQA. N-linked (GlcNAc...) asparagine; by host glycans are attached at residues Asn77 and Asn144. Ser217 acts as the Acyl-ester intermediate in catalysis. Asn257, Asn269, and Asn283 each carry an N-linked (GlcNAc...) asparagine; by host glycan. The active-site Charge relay system is Glu337. 2 N-linked (GlcNAc...) asparagine; by host glycosylation sites follow: Asn373 and Asn394. His451 acts as the Charge relay system in catalysis. Asn469 is a glycosylation site (N-linked (GlcNAc...) asparagine; by host).

Belongs to the type-B carboxylesterase/lipase family.

It catalyses the reaction an acylcholine + H2O = a carboxylate + choline + H(+). May be involved in the disruption of the host membrane. This is Probable cholinesterase from Acanthamoeba polyphaga mimivirus (APMV).